An 82-amino-acid chain; its full sequence is Sec-independent protein translocase protein TatA (82 aa).

A helical membrane pass occupies residues Met1–Thr21.

The protein belongs to the TatA/E family. As to quaternary structure, the Tat system comprises two distinct complexes: a TatABC complex, containing multiple copies of TatA, TatB and TatC subunits, and a separate TatA complex, containing only TatA subunits. Substrates initially bind to the TatABC complex, which probably triggers association of the separate TatA complex to form the active translocon.

It localises to the cell inner membrane. In terms of biological role, part of the twin-arginine translocation (Tat) system that transports large folded proteins containing a characteristic twin-arginine motif in their signal peptide across membranes. TatA could form the protein-conducting channel of the Tat system. The polypeptide is Sec-independent protein translocase protein TatA (Leptothrix cholodnii (strain ATCC 51168 / LMG 8142 / SP-6) (Leptothrix discophora (strain SP-6))).